The following is a 294-amino-acid chain: F-box protein SKIP3 (294 aa).

Residues 21–67 (SSTLDSLPEGCISNIISFTSPEDACVAAAVSKIFESAVKSDIVWEKF) enclose the F-box domain.

Part of a SCF (SKP1-cullin-F-box) protein ligase complex. Interacts with SKP1A/ASK1.

The protein operates within protein modification; protein ubiquitination. The chain is F-box protein SKIP3 (SKIP3) from Arabidopsis thaliana (Mouse-ear cress).